A 489-amino-acid chain; its full sequence is Glycogen synthase (489 aa).

An ADP-alpha-D-glucose-binding site is contributed by R20.

This sequence belongs to the glycosyltransferase 1 family. Bacterial/plant glycogen synthase subfamily.

The enzyme catalyses [(1-&gt;4)-alpha-D-glucosyl](n) + ADP-alpha-D-glucose = [(1-&gt;4)-alpha-D-glucosyl](n+1) + ADP + H(+). The protein operates within glycan biosynthesis; glycogen biosynthesis. Functionally, synthesizes alpha-1,4-glucan chains using ADP-glucose. The chain is Glycogen synthase from Chlorobium limicola (strain DSM 245 / NBRC 103803 / 6330).